Consider the following 233-residue polypeptide: Protein DEHYDRATION-INDUCED 19 homolog 2 (233 aa).

Residues 176–215 (DLHSDSSDNNFLLNKFPDDKTAERAEPSLSEKDQKERAQR) form a disordered region. A compositionally biased stretch (basic and acidic residues) spans 191–214 (FPDDKTAERAEPSLSEKDQKERAQ).

The protein belongs to the Di19 family.

This chain is Protein DEHYDRATION-INDUCED 19 homolog 2 (DI19-2), found in Oryza sativa subsp. japonica (Rice).